Here is a 433-residue protein sequence, read N- to C-terminus: Steroid hormone receptor ERR2 (433 aa).

The tract at residues 1–41 (MSSEDRHLGSSCGSFIKTEPSSPSSGIDALSHHSPSGSSDA) is disordered. Low complexity predominate over residues 32 to 41 (HHSPSGSSDA). The interval 93–211 (YMLNAIPKRL…SPPAKKPLTK (119 aa)) is interaction with NANOG. Positions 100–186 (KRLCLVCGDI…RVRGGRQKYK (87 aa)) form a DNA-binding region, nuclear receptor. 2 consecutive NR C4-type zinc fingers follow at residues 103 to 123 (CLVCGDIASGYHYGVASCEAC) and 139 to 163 (CPATNECEITKRRRKSCQACRFMKC). An essential for ESRRB transcriptional activity and interaction with NCOA3 region spans residues 203–433 (PPAKKPLTKI…LFLEMLEAKV (231 aa)). The NR LBD domain occupies 208-432 (PLTKIVSYLL…KLFLEMLEAK (225 aa)).

This sequence belongs to the nuclear hormone receptor family. NR3 subfamily. As to quaternary structure, binds DNA as a monomer. Interacts with NR0B1; represses ESRRB activity at the GATA6 promoter. Interacts with NANOG; reciprocally modulates their transcriptional activities and activates POU5F1 expression. Interacts with NCOA3; mediates the interaction between ESRRB and RNA polymerase II complexes and allows NCOA3 corecruitment to ESRRB, KLF4, NANOG, and SOX2 enhancer regions to trigger ESRRB-dependent gene activation involved in self-renewal and pluripotency. Interacts with KDM1A; co-occupes the core set of ESRRB targets including ELF5 and EOMES. Interacts with the multiprotein complex Integrator, at least composed of INTS1, INTS2, INTS3, INTS4, INTS5, INTS6, INTS7, INTS8, INTS9/RC74, INTS10, INTS11/CPSF3L and INTS12; ESRRB is probably not a core component of the integrator complex and associates to integrator via its interaction with INTS1 and INTS9; attracts the transcriptional machinery. Interacts with JARID2. Interacts with POU5F1; recruits ESRRB near the POU5F1-SOX2 element in the NANOG proximal promoter leading to activation of NANOG expression; the interaction is DNA independent. In terms of processing, acetylated by PCAF/KAT2 (in vitro).

It is found in the nucleus. It localises to the cytoplasm. The protein localises to the chromosome. Its function is as follows. Transcription factor that binds a canonical ESRRB recognition (ERRE) sequence 5'TCAAGGTCA-3' localized on promoter and enhancer of targets genes regulating their expression or their transcription activity. Plays a role, in a LIF independent manner, in maintainance of self-renewal and pluripotency of embryonic and trophoblast stem cells through different signaling pathways including FGF signaling pathway and Wnt signaling pathways. Involved in morula development (2-16 cells embryos) by acting as a regulator at the 8-cell stage. Upon FGF signaling pathway activation, interacts with KDM1A by directly binding to enhancer site of ELF5 and EOMES and activating their transcription leading to self-renewal of trophoblast stem cells. Also regulates expression of multiple rod-specific genes and is required for survival of this cell type. Plays a role as transcription factor activator of GATA6, NR0B1, POU5F1 and PERM1. Plays a role as transcription factor repressor of NFE2L2 transcriptional activity and ESR1 transcriptional activity. During mitosis remains bound to a subset of interphase target genes, including pluripotency regulators, through the canonical ESRRB recognition (ERRE) sequence, leading to their transcriptional activation in early G1 phase. Can coassemble on structured DNA elements with other transcription factors like SOX2, POU5F1, KDM1A and NCOA3 to trigger ESRRB-dependent gene activation. This mechanism, in the case of SOX2 corecruitment prevents the embryonic stem cells (ESCs) to epiblast stem cells (EpiSC) transition through positive regulation of NR0B1 that inhibits the EpiSC transcriptional program. Also plays a role inner ear development by controlling expression of ion channels and transporters and in early placentation. This is Steroid hormone receptor ERR2 from Rattus norvegicus (Rat).